A 25-amino-acid chain; its full sequence is Secapin-1 (25 aa).

C9 and C20 are oxidised to a cystine.

As to expression, expressed by the venom gland.

Its subcellular location is the secreted. Functionally, serine protease inhibitor which exhibits antifibrinolytic, antielastolytic and antimicrobial activities. Displays antimicrobial activity against bacteria and fungi. Likely functions in the innate immune response to microbial infection and possibly in the venom, as an antifibrinolytic agent. This Apis mellifera (Honeybee) protein is Secapin-1.